Here is a 218-residue protein sequence, read N- to C-terminus: Small ribosomal subunit protein uS3c (218 aa).

The KH type-2 domain maps to 47 to 118 (VQKNMRTSSG…KLNIAVTRIA (72 aa)).

It belongs to the universal ribosomal protein uS3 family. As to quaternary structure, part of the 30S ribosomal subunit.

The protein resides in the plastid. It localises to the chloroplast. The polypeptide is Small ribosomal subunit protein uS3c (rps3) (Nicotiana tomentosiformis (Tobacco)).